The following is a 123-amino-acid chain: DNA-directed RNA polymerase subunit omega (123 aa).

Positions 67-123 are disordered; sequence EESAADSLSLGGFSTADVEAEVGGGPVQPDPGASQERAFDEAADGTAQGSGDPDPTT.

It belongs to the RNA polymerase subunit omega family. In terms of assembly, the RNAP catalytic core consists of 2 alpha, 1 beta, 1 beta' and 1 omega subunit. When a sigma factor is associated with the core the holoenzyme is formed, which can initiate transcription.

The enzyme catalyses RNA(n) + a ribonucleoside 5'-triphosphate = RNA(n+1) + diphosphate. Its function is as follows. Promotes RNA polymerase assembly. Latches the N- and C-terminal regions of the beta' subunit thereby facilitating its interaction with the beta and alpha subunits. In Halorhodospira halophila (strain DSM 244 / SL1) (Ectothiorhodospira halophila (strain DSM 244 / SL1)), this protein is DNA-directed RNA polymerase subunit omega.